A 285-amino-acid polypeptide reads, in one-letter code: Release factor glutamine methyltransferase (285 aa).

S-adenosyl-L-methionine contacts are provided by D143 and N189. 189 to 192 (NPPY) lines the substrate pocket.

This sequence belongs to the protein N5-glutamine methyltransferase family. PrmC subfamily.

It carries out the reaction L-glutaminyl-[peptide chain release factor] + S-adenosyl-L-methionine = N(5)-methyl-L-glutaminyl-[peptide chain release factor] + S-adenosyl-L-homocysteine + H(+). In terms of biological role, methylates the class 1 translation termination release factors RF1/PrfA and RF2/PrfB on the glutamine residue of the universally conserved GGQ motif. This chain is Release factor glutamine methyltransferase, found in Clostridium acetobutylicum (strain ATCC 824 / DSM 792 / JCM 1419 / IAM 19013 / LMG 5710 / NBRC 13948 / NRRL B-527 / VKM B-1787 / 2291 / W).